The chain runs to 412 residues: Esterase EstD (412 aa).

A signal peptide spans 1–20 (MRLTVFLSLFLGVMVFGAFD). Serine 243 functions as the Nucleophile in the catalytic mechanism. Catalysis depends on charge relay system residues aspartate 347 and histidine 378.

Belongs to the AB hydrolase superfamily. Esterase 10 family. As to quaternary structure, exists mainly as a monomer and, to some extent as a dimer.

The catalysed reaction is a carboxylic ester + H2O = an alcohol + a carboxylate + H(+). With respect to regulation, is strongly inhibited by phenylmethylsulfonyl fluoride, a serine protease inhibitor, and by mercury chloride. Diethyl pyrocarbonate, a histidine modifier, also inhibits the reaction, albeit less pronounced than phenylmethylsulfonyl fluoride. EDTA and dithiothreitol have no effect on enzyme activity. Functionally, exhibits significant esterase activity with a preference for short acyl chain esters (C4-C8) in vitro. Its physiological function is not known. Displays neither proteolytic activity using casein as substrate, nor peptidase activity when assayed with L-leucine p-nitroanilide and L-proline p-nitroanilide. The protein is Esterase EstD of Thermotoga maritima (strain ATCC 43589 / DSM 3109 / JCM 10099 / NBRC 100826 / MSB8).